A 202-amino-acid chain; its full sequence is Nucleoside triphosphate pyrophosphatase (202 aa).

Catalysis depends on D79, which acts as the Proton acceptor.

This sequence belongs to the Maf family. A divalent metal cation serves as cofactor.

The protein localises to the cytoplasm. The enzyme catalyses a ribonucleoside 5'-triphosphate + H2O = a ribonucleoside 5'-phosphate + diphosphate + H(+). It catalyses the reaction a 2'-deoxyribonucleoside 5'-triphosphate + H2O = a 2'-deoxyribonucleoside 5'-phosphate + diphosphate + H(+). Nucleoside triphosphate pyrophosphatase. May have a dual role in cell division arrest and in preventing the incorporation of modified nucleotides into cellular nucleic acids. This Nitrobacter winogradskyi (strain ATCC 25391 / DSM 10237 / CIP 104748 / NCIMB 11846 / Nb-255) protein is Nucleoside triphosphate pyrophosphatase.